We begin with the raw amino-acid sequence, 237 residues long: Phosphoribosylaminoimidazole-succinocarboxamide synthase (237 aa).

It belongs to the SAICAR synthetase family.

The enzyme catalyses 5-amino-1-(5-phospho-D-ribosyl)imidazole-4-carboxylate + L-aspartate + ATP = (2S)-2-[5-amino-1-(5-phospho-beta-D-ribosyl)imidazole-4-carboxamido]succinate + ADP + phosphate + 2 H(+). It participates in purine metabolism; IMP biosynthesis via de novo pathway; 5-amino-1-(5-phospho-D-ribosyl)imidazole-4-carboxamide from 5-amino-1-(5-phospho-D-ribosyl)imidazole-4-carboxylate: step 1/2. This is Phosphoribosylaminoimidazole-succinocarboxamide synthase from Fusobacterium nucleatum subsp. nucleatum (strain ATCC 25586 / DSM 15643 / BCRC 10681 / CIP 101130 / JCM 8532 / KCTC 2640 / LMG 13131 / VPI 4355).